The primary structure comprises 131 residues: Large ribosomal subunit protein uL18 (131 aa).

It belongs to the universal ribosomal protein uL18 family. As to quaternary structure, part of the 50S ribosomal subunit; part of the 5S rRNA/L5/L18/L25 subcomplex. Contacts the 5S and 23S rRNAs.

Its function is as follows. This is one of the proteins that bind and probably mediate the attachment of the 5S RNA into the large ribosomal subunit, where it forms part of the central protuberance. This chain is Large ribosomal subunit protein uL18, found in Corynebacterium kroppenstedtii (strain DSM 44385 / JCM 11950 / CIP 105744 / CCUG 35717).